Here is a 236-residue protein sequence, read N- to C-terminus: Uridylate kinase (236 aa).

10-13 (KLSG) serves as a coordination point for ATP. Gly-52 serves as a coordination point for UMP. Positions 53 and 57 each coordinate ATP. Residues Asp-72 and 133–140 (TGNPFFTT) each bind UMP. Positions 160, 166, and 169 each coordinate ATP.

This sequence belongs to the UMP kinase family. In terms of assembly, homohexamer.

The protein localises to the cytoplasm. The enzyme catalyses UMP + ATP = UDP + ADP. Its pathway is pyrimidine metabolism; CTP biosynthesis via de novo pathway; UDP from UMP (UMPK route): step 1/1. Its activity is regulated as follows. Inhibited by UTP. Functionally, catalyzes the reversible phosphorylation of UMP to UDP. The protein is Uridylate kinase of Cupriavidus pinatubonensis (strain JMP 134 / LMG 1197) (Cupriavidus necator (strain JMP 134)).